We begin with the raw amino-acid sequence, 315 residues long: Porphobilinogen deaminase (315 aa).

Cys-241 is subject to S-(dipyrrolylmethanemethyl)cysteine.

The protein belongs to the HMBS family. In terms of assembly, monomer. Dipyrromethane is required as a cofactor.

It carries out the reaction 4 porphobilinogen + H2O = hydroxymethylbilane + 4 NH4(+). Its pathway is porphyrin-containing compound metabolism; protoporphyrin-IX biosynthesis; coproporphyrinogen-III from 5-aminolevulinate: step 2/4. Functionally, tetrapolymerization of the monopyrrole PBG into the hydroxymethylbilane pre-uroporphyrinogen in several discrete steps. The chain is Porphobilinogen deaminase from Nitratidesulfovibrio vulgaris (strain DP4) (Desulfovibrio vulgaris).